The primary structure comprises 283 residues: Nucleoid occlusion protein (283 aa).

The disordered stretch occupies residues 1 to 26; it reads MKQPFSRLFGFGDKQDQEMETGKQEE. Residues 13 to 26 are compositionally biased toward basic and acidic residues; sequence DKQDQEMETGKQEE. Residues 143–162 constitute a DNA-binding region (H-T-H motif); that stretch reads ESLAQRLGKGQSTIANKLRL.

Belongs to the ParB family.

The protein localises to the cytoplasm. It localises to the nucleoid. In terms of biological role, effects nucleoid occlusion by binding relatively nonspecifically to DNA and preventing the assembly of the division machinery in the vicinity of the nucleoid, especially under conditions that disturb the cell cycle. It helps to coordinate cell division and chromosome segregation by preventing the formation of the Z ring through the nucleoid, which would cause chromosome breakage. In Halalkalibacterium halodurans (strain ATCC BAA-125 / DSM 18197 / FERM 7344 / JCM 9153 / C-125) (Bacillus halodurans), this protein is Nucleoid occlusion protein.